A 1393-amino-acid polypeptide reads, in one-letter code: DNA-directed RNA polymerase subunit beta' (1393 aa).

Zn(2+)-binding residues include cysteine 72, cysteine 74, cysteine 87, and cysteine 90. Mg(2+) is bound by residues aspartate 463, aspartate 465, and aspartate 467. Zn(2+) is bound by residues cysteine 812, cysteine 887, cysteine 894, and cysteine 897.

The protein belongs to the RNA polymerase beta' chain family. The RNAP catalytic core consists of 2 alpha, 1 beta, 1 beta' and 1 omega subunit. When a sigma factor is associated with the core the holoenzyme is formed, which can initiate transcription. Mg(2+) is required as a cofactor. Requires Zn(2+) as cofactor.

It catalyses the reaction RNA(n) + a ribonucleoside 5'-triphosphate = RNA(n+1) + diphosphate. In terms of biological role, DNA-dependent RNA polymerase catalyzes the transcription of DNA into RNA using the four ribonucleoside triphosphates as substrates. This Chlamydia abortus (strain DSM 27085 / S26/3) (Chlamydophila abortus) protein is DNA-directed RNA polymerase subunit beta'.